A 448-amino-acid polypeptide reads, in one-letter code: Leukocyte immunoglobulin-like receptor subfamily B member 4 (448 aa).

The first 21 residues, 1–21, serve as a signal peptide directing secretion; it reads MIPTFTALLCLGLSLGPRTHM. The Extracellular segment spans residues 22 to 259; sequence QAGPLPKPTL…PHSGLRRHWE (238 aa). Ig-like C2-type domains lie at 27 to 118 and 124 to 218; these read PKPT…LVMT and PTLS…LIVS. 2 disulfides stabilise this stretch: C49-C98 and C144-C195. A disordered region spans residues 217-248; that stretch reads VSGSLEDPRPSPTRSVSTAAGPEDQPLMPTGS. A helical membrane pass occupies residues 260 to 280; it reads VLIGVLVVSILLLSLLLFLLL. Over 281–448 the chain is Cytoplasmic; it reads QHWRQGKHRT…PSVYATLAIH (168 aa). A disordered region spans residues 297 to 448; the sequence is DFQRPPGAAE…PSVYATLAIH (152 aa). S319 is subject to Phosphoserine. A compositionally biased stretch (basic and acidic residues) spans 344–354; it reads MDTRQSPHDED. The short motif at 358–363 is the ITIM motif 1 element; it reads VTYAKV. Basic and acidic residues predominate over residues 384-398; the sequence is LDTKDRQAEEDRQMD. 2 short sequence motifs (ITIM motif) span residues 410 to 415 and 440 to 445; these read VTYAQL and SVYATL.

As to quaternary structure, interacts with PTPN6. In terms of tissue distribution, detected on monocytes, macrophages, dendritic cells, natural killer cells and B-cells (at protein level). Expressed in the lung.

The protein resides in the cell membrane. Inhibitory receptor involved in the down-regulation of the immune response and the development of immune tolerance. Receptor for FN1. Receptor for apolipoprotein APOE. Receptor for ALCAM/CD166. Inhibits receptor-mediated phosphorylation of cellular proteins and mobilization of intracellular calcium ions. Inhibits FCGR1A/CD64-mediated monocyte activation by inducing phosphatase-mediated down-regulation of the phosphorylation of multiple proteins including LCK, SYK, LAT and ERK, leading to a reduction in TNF production. This inhibition of monocyte activation occurs at least in part via binding to FN1. Inhibits T cell proliferation, inducing anergy, suppressing the differentiation of IFNG-producing CD8+ cytotoxic T cells and enhancing the generation of CD8+ T suppressor cells. Induces up-regulation of CD86 on dendritic cells. Interferes with TNFRSF5-signaling and NF-kappa-B up-regulation. The chain is Leukocyte immunoglobulin-like receptor subfamily B member 4 (LILRB4) from Homo sapiens (Human).